The chain runs to 97 residues: Integration host factor subunit alpha (97 aa).

It belongs to the bacterial histone-like protein family. In terms of assembly, heterodimer of an alpha and a beta chain.

This protein is one of the two subunits of integration host factor, a specific DNA-binding protein that functions in genetic recombination as well as in transcriptional and translational control. The sequence is that of Integration host factor subunit alpha from Histophilus somni (strain 2336) (Haemophilus somnus).